We begin with the raw amino-acid sequence, 206 residues long: MTPIQEQLIALGGVFQAAVLVDRIAKTGQVSEAALSCMLGSLLVVDPKDTLDVYGGDDLNLHEGYRAMASALERDPATLQREPLRYALSMLGLERQLAKRDDLLEIIGKRIPVIQSQVEHFGIAHENVIAATGALYEDTLSTLRQRIQVQGDMRNLQQPNNASKIRAILLAGIRSARLWRQVGGHRWQLVFSRRKLLKELYPLLHG.

Belongs to the HflD family.

Its subcellular location is the cytoplasm. It is found in the cell inner membrane. The polypeptide is High frequency lysogenization protein HflD homolog (Pseudomonas syringae pv. tomato (strain ATCC BAA-871 / DC3000)).